A 197-amino-acid chain; its full sequence is Fucoxanthin-chlorophyll a-c binding protein D, chloroplastic (197 aa).

Residues 1–31 (MKTAVIASLIAGAAAFAPAKNAARTSVATNM) constitute a chloroplast transit peptide. A run of 3 helical transmembrane segments spans residues 73–94 (ISML…PGTI), 114–133 (PAGG…SSVM), and 174–196 (GRAA…SLLP).

The protein belongs to the fucoxanthin chlorophyll protein family. As to quaternary structure, the LHC complex of chromophytic algae is composed of fucoxanthin, chlorophyll A and C bound non-covalently by fucoxanthin chlorophyll proteins (FCPs). The ratio of the pigments in LHC; fucoxanthin: chlorophyll C: chlorophyll A; (0.6-1): (0.1-0.3): (1).

It localises to the plastid. The protein resides in the chloroplast thylakoid membrane. Functionally, the light-harvesting complex (LHC) functions as a light receptor, it captures and delivers excitation energy to photosystems with which it is closely associated. Energy is transferred from the carotenoid and chlorophyll C (or B) to chlorophyll A and the photosynthetic reaction centers where it is used to synthesize ATP and reducing power. The sequence is that of Fucoxanthin-chlorophyll a-c binding protein D, chloroplastic (FCPD) from Phaeodactylum tricornutum (Diatom).